The sequence spans 138 residues: Small ribosomal subunit protein bS16 (138 aa).

A disordered region spans residues 92-138 (QAAKREADAKQAAKEAAEAKAAAEAEAKAAAEAESADAGAEEAPAEA). Over residues 94 to 122 (AKREADAKQAAKEAAEAKAAAEAEAKAAA) the composition is skewed to basic and acidic residues.

Belongs to the bacterial ribosomal protein bS16 family.

In Synechococcus sp. (strain WH7803), this protein is Small ribosomal subunit protein bS16.